Here is a 292-residue protein sequence, read N- to C-terminus: Glyoxylase B2 (292 aa).

Positions 72, 74, 76, 77, 148, and 166 each coordinate Zn(2+). Substrate-binding positions include 175 to 181, 208 to 210, and 284 to 287; these read TARCDFP, HDY, and KIPL. H208 contacts Zn(2+).

Belongs to the metallo-beta-lactamase superfamily. Glyoxalase II family. It depends on Zn(2+) as a cofactor.

This chain is Glyoxylase B2 (gloB2), found in Dictyostelium discoideum (Social amoeba).